Reading from the N-terminus, the 85-residue chain is Large ribosomal subunit protein bL27 (85 aa).

This sequence belongs to the bacterial ribosomal protein bL27 family.

The protein is Large ribosomal subunit protein bL27 of Xylella fastidiosa (strain 9a5c).